We begin with the raw amino-acid sequence, 433 residues long: Acetyl-CoA-benzylalcohol acetyltransferase (433 aa).

Residues His152 and Asp377 each act as proton acceptor in the active site.

The protein belongs to the plant acyltransferase family. In terms of processing, the N-terminus is blocked. As to expression, expressed in petals, style, sepals and stamens. Very low expression in stigma and not detected in leaves.

It catalyses the reaction benzyl alcohol + acetyl-CoA = benzyl acetate + CoA. The enzyme catalyses (E)-cinnamyl alcohol + acetyl-CoA = (E)-cinnamyl acetate + CoA. Involved in the biosynthesis of benzyl acetate, a major constituent of the floral scent. Can use benzylalcohol, cinnamylalcohol, 3-cis-hexene-1-ol or heptanol as substrates. Has some activity with 2-phenylethanol and 2-naphtalene-ethanol, but no activity with linalool, 2-hydroxybenzylalcohol, 3-hydroxybenzylalcohol or 4-hydroxybenzylalcohol. This Clarkia breweri (Fairy fans) protein is Acetyl-CoA-benzylalcohol acetyltransferase (BEAT).